The following is a 363-amino-acid chain: MIGSASDSSSKLGRLRFLSETAAIKVSPLILGEVSYDGARSDFLKSMNKNRAFELLDTFYEAGGNFIDAANNCQNEQSEEWIGEWIQSRRLRDQIVIATKFIKSDKKYKAGESNTANYCGNHKRSLHVSVRDSLRKLQTDWIDILYVHWWDYMSSIEEFMDSLHILVQQGKVLYLGVSDTPAWVVSAANYYATSYGKTPFSIYQGKWNVLNRDFERDIIPMARHFGMALAPWDVMGGGRFQSKKAMEERRKNGEGIRSFVGASEQTDAEIKISEALAKIAEEHGTESVTAIAIAYVRSKAKNFFPSVEGGKIEDLKENIKALSIDLTPDNIKYLESIVPFDIGFPNNFIVLNSLTQKYGTNNV.

This sequence belongs to the aldo/keto reductase family. Aldo/keto reductase 2 subfamily.

The sequence is that of Putative aryl-alcohol dehydrogenase AAD3 (AAD3) from Saccharomyces cerevisiae (strain ATCC 204508 / S288c) (Baker's yeast).